The primary structure comprises 988 residues: MGELPKDDWQMNRWKWDGQRFEAIELQGESLQLSNKKGLDLNLPCGFNDVEGTPVDLTRPSKKVRSGSPGSGGGGGGNYPKCQVDNCKEDLSIAKDYHRRHKVCEVHSKATKALVGKQMQRFCQQCSRFHLLSEFDEGKRSCRRRLDGHNRRRRKTQPDAITSQVVALENRDNTSNNTNMDVMALLTALVCAQGRNEATTNGSPGVPQREQLLQILNKIKALPLPMNLTSKLNNIGILARKNPEQPSPMNPQNSMNGASSPSTMDLLAALSASLGSSAPEAIAFLSQGGFGNKESNDRTKLTSSDHSATTSLEKKTLEFPSFGGGERTSSTNHSPSQYSDSRGQDTRSSLSLQLFTSSPEEESRPKVASSTKYYSSASSNPVEDRSPSSSPVMQELFPLHTSPETRRYNNYKDTSTSPRTSCLPLELFGASNRGATANPNYNVLRHQSGYASSGSDYSPPSLNSNAQERTGKISFKLFEKDPSQLPNTLRTEIFRWLSSFPSDMESFIRPGCVILSVYVAMSASAWEQLEENLLQRVRSLVQDSEFWSNSRFLVNAGRQLASHKHGRIRLSKSWRTLNLPELITVSPLAVVAGEETALIVRGRNLTNDGMRLRCAHMGNYASMEVTGREHRLTKVDELNVSSFQVQSASSVSLGRCFIELENGLRGDNFPLIIANATICKELNRLEEEFHPKDVIEEQIQNLDRPRSREEVLCFLNELGWLFQRKWTSDIHGEPDFSLPRFKFLLVCSVERDYCSLIRTVLDMMVERNLGKDGLLNKESLDMLADIQLLNRAIKRRNTKMAETLIHYSVNPSTRNFIFLPSIAGPGDITPLHLAASTSSSDDMIDALTNDPQEIGLSCWNTLVDATGQTPFSYAAMRDNHSYNTLVARKLADKRNGQISLNIENGIDQIGLSKRLSSELKRSCNTCASVALKYQRKVSGSRRLFPTPIIHSMLAVATVCVCVCVFMHAFPMVRQGSHFSWGGLDYGSI.

A disordered region spans residues Gly52 to Tyr79. Positions Pro69–Asn78 are enriched in gly residues. An SBP-type zinc finger spans residues Tyr79–Thr156. Zn(2+) is bound by residues Cys82, Cys87, Cys104, His107, Cys123, Cys126, His130, and Cys142. Residues Lys139–Lys155 carry the Bipartite nuclear localization signal motif. Disordered stretches follow at residues Arg240–Ser262 and Gly289–Thr416. 3 stretches are compositionally biased toward polar residues: residues Asn250 to Ser262, Leu301 to Ser311, and Arg327 to Ser358. The span at Ala368–Ser379 shows a compositional bias: low complexity.

The cofactor is Zn(2+).

The protein resides in the nucleus. Its function is as follows. Trans-acting factor that binds specifically to the consensus nucleotide sequence 5'-TNCGTACAA-3'. In Arabidopsis thaliana (Mouse-ear cress), this protein is Squamosa promoter-binding-like protein 16 (SPL16).